Here is a 576-residue protein sequence, read N- to C-terminus: V-type ATP synthase alpha chain (576 aa).

Position 238–245 (238–245 (GPFGAGKT)) interacts with ATP.

Belongs to the ATPase alpha/beta chains family.

It carries out the reaction ATP + H2O + 4 H(+)(in) = ADP + phosphate + 5 H(+)(out). Functionally, produces ATP from ADP in the presence of a proton gradient across the membrane. The V-type alpha chain is a catalytic subunit. This is V-type ATP synthase alpha chain from Borrelia recurrentis (strain A1).